Reading from the N-terminus, the 730-residue chain is MAGLWVGGSVLVAAGRRGSRSPRPLMRSVALWTLKHVPQYSRQRLLVSRSLCLAGYDSNEKTFDKILIANRGEIACRVIKTCKKMGIKTVAVHSDVDASSVHVTMADEAVCVGPAPTSKSYLNMDAIMEAVRTTRAQAVHPGYGFLSENKEFAKCLAAEGVIFIGPDTHAIQAMGDKIESKLLAKKAKVNTIPGFDGVVKDADEAVRIAREIGYPVMIKASAGGGGKGMRIAWDDEETRDGFRFSSQEAASSFGDDRLLIEKFIDNPRHIEIQVLGDKHGNALWLNERECSIQRRNQKVVEEAPSIFLDSETRRAMGEQAVALAKAVNYSSAGTVEFLVDSKKNFYFLEMNTRLQVEHPVTECITGLDLVQEMIRVAKGYPLRHRQADIPINGWAVECRVYAEDPYKSFGLPSIGRLSQYQEPIHLPGVRVDSGIQPGSDISIYYDPMISKLITYGSNRMEALKRMENALDNYVIRGVTHNIALLREVIINSRFVEGDINTKFLSDVYPDGFKGHKLTEDERNQLLAIASSLFVASQLRAQRFQEPENSRVPIIKPQVANWELSIRLHDEVHTVTASNSGPTFSVEVDGSKLNVTSTWNLASPLLSVSIDGTQRTIQCLSRDAGGNMSIQFLGTVYKVHILTKLAAELNKFMLEKAAEDTSSILHSPMPGVVVAVSVKPGDLVAEGQEICVIEAMKMQNSMTAGKTGKVKSVHCKAGDTVGEGDLLVELE.

A mitochondrion-targeting transit peptide spans 1-52; sequence MAGLWVGGSVLVAAGRRGSRSPRPLMRSVALWTLKHVPQYSRQRLLVSRSLC. Positions 62–509 constitute a Biotin carboxylation domain; sequence TFDKILIANR…NTKFLSDVYP (448 aa). N6-acetyllysine; alternate is present on Lys65. At Lys65 the chain carries N6-succinyllysine; alternate. Lys119 carries the post-translational modification N6-succinyllysine. Lys150 carries the N6-acetyllysine; alternate modification. Lys150 bears the N6-succinyllysine; alternate mark. Lys154 carries the post-translational modification N6-acetyllysine. Lys177 contributes to the ATP binding site. Residues 181 to 378 enclose the ATP-grasp domain; sequence KLLAKKAKVN…LVQEMIRVAK (198 aa). Lys188 carries the N6-succinyllysine modification. An N6-acetyllysine; alternate modification is found at Lys200. N6-succinyllysine; alternate is present on Lys200. ATP-binding positions include 209–270, Glu261, and Asn296; that span reads AREI…PRHI. Position 252 is a phosphoserine (Ser252). The residue at position 262 (Lys262) is an N6-succinyllysine. The Mg(2+) site is built by Glu336, Glu349, and Asn351. Residues Glu336, Glu349, and Asn351 each coordinate Mn(2+). Residue Glu349 is part of the active site. The residue at position 407 (Lys407) is an N6-succinyllysine. Residue Phe409 participates in biotin binding. Lys502, Lys513, and Lys650 each carry N6-succinyllysine. The Biotinyl-binding domain occupies 655–730; the sequence is KAAEDTSSIL…GEGDLLVELE (76 aa). An N6-biotinyllysine modification is found at Lys696.

In terms of assembly, the holoenzyme is a dodecamer composed of 6 PCCA/alpha subunits and 6 PCCB/beta subunits. Interacts (via the biotin carboxylation domain) with SIRT4. Interacts with SIRT3 and SIRT5. It depends on Mg(2+) as a cofactor. The cofactor is Mn(2+). Biotin serves as cofactor. In terms of processing, acetylated. Post-translationally, the biotin cofactor is covalently attached to the C-terminal biotinyl-binding domain and is required for the catalytic activity. Biotinylation is catalyzed by HLCS.

It localises to the mitochondrion matrix. It catalyses the reaction propanoyl-CoA + hydrogencarbonate + ATP = (S)-methylmalonyl-CoA + ADP + phosphate + H(+). The catalysed reaction is butanoyl-CoA + hydrogencarbonate + ATP = (2S)-ethylmalonyl-CoA + ADP + phosphate + H(+). It participates in metabolic intermediate metabolism; propanoyl-CoA degradation; succinyl-CoA from propanoyl-CoA: step 1/3. In terms of biological role, this is one of the 2 subunits of the biotin-dependent propionyl-CoA carboxylase (PCC), a mitochondrial enzyme involved in the catabolism of odd chain fatty acids, branched-chain amino acids isoleucine, threonine, methionine, and valine and other metabolites. Propionyl-CoA carboxylase catalyzes the carboxylation of propionyl-CoA/propanoyl-CoA to D-methylmalonyl-CoA/(S)-methylmalonyl-CoA. Within the holoenzyme, the alpha subunit catalyzes the ATP-dependent carboxylation of the biotin carried by the biotin carboxyl carrier (BCC) domain, while the beta subunit then tranfers the carboxyl group from carboxylated biotin to propionyl-CoA. Propionyl-CoA carboxylase also significantly acts on butyryl-CoA/butanoyl-CoA, which is converted to ethylmalonyl-CoA/(2S)-ethylmalonyl-CoA at a much lower rate. Other alternative minor substrates include (2E)-butenoyl-CoA/crotonoyl-CoA. This chain is Propionyl-CoA carboxylase alpha chain, mitochondrial, found in Sus scrofa (Pig).